Consider the following 105-residue polypeptide: Nucleoid-associated protein SSP2277 (105 aa).

Positions 1–41 are disordered; sequence MRGGGNMQQMMKQMQKMQKKMGEEQEKLKEEKVQGTAGGGM. A compositionally biased stretch (low complexity) spans 7–16; the sequence is MQQMMKQMQK. Residues 20–33 show a composition bias toward basic and acidic residues; that stretch reads KMGEEQEKLKEEKV.

Belongs to the YbaB/EbfC family. Homodimer.

Its subcellular location is the cytoplasm. The protein resides in the nucleoid. Functionally, binds to DNA and alters its conformation. May be involved in regulation of gene expression, nucleoid organization and DNA protection. The sequence is that of Nucleoid-associated protein SSP2277 from Staphylococcus saprophyticus subsp. saprophyticus (strain ATCC 15305 / DSM 20229 / NCIMB 8711 / NCTC 7292 / S-41).